A 243-amino-acid chain; its full sequence is Ribonuclease HII (243 aa).

Residues 23–217 form the RNase H type-2 domain; the sequence is SVIVGVDEVG…LSSECEGAPP (195 aa). Residues Asp29, Glu30, and Asp122 each coordinate a divalent metal cation. Residues 223 to 243 form a disordered region; it reads LSSTGIKTPVDGRGDAVATRD. Residues 232-243 are compositionally biased toward basic and acidic residues; sequence VDGRGDAVATRD.

Belongs to the RNase HII family. Mn(2+) serves as cofactor. Requires Mg(2+) as cofactor.

The protein resides in the cytoplasm. The enzyme catalyses Endonucleolytic cleavage to 5'-phosphomonoester.. Functionally, endonuclease that specifically degrades the RNA of RNA-DNA hybrids. In Anaplasma marginale (strain St. Maries), this protein is Ribonuclease HII.